The following is a 257-amino-acid chain: Flap endonuclease Xni (257 aa).

Aspartate 109 provides a ligand contact to Mg(2+). Positions 165–255 (LKPEQLADYW…FNLQDIRYEK (91 aa)) constitute a 5'-3' exonuclease domain. Positions 176, 177, 187, and 190 each coordinate K(+). The interaction with DNA stretch occupies residues 189–194 (GIGPKA).

It belongs to the Xni family. It depends on Mg(2+) as a cofactor. K(+) serves as cofactor.

Its function is as follows. Has flap endonuclease activity. During DNA replication, flap endonucleases cleave the 5'-overhanging flap structure that is generated by displacement synthesis when DNA polymerase encounters the 5'-end of a downstream Okazaki fragment. In Aliivibrio salmonicida (strain LFI1238) (Vibrio salmonicida (strain LFI1238)), this protein is Flap endonuclease Xni.